The following is a 399-amino-acid chain: ATP-dependent RNA helicase fal1 (399 aa).

A Q motif motif is present at residues 25 to 53 (PTFEDMHLKESLLRGIYAYGYESPSAVQS). Residues 56–226 (IVQICKGRDT…TKFMTDPVRV (171 aa)) form the Helicase ATP-binding domain. 69–76 (AQSGTGKT) is a binding site for ATP. The DEAD box signature appears at 174 to 177 (DEAD). The 162-residue stretch at 237–398 (GIKQYFIAVE…EMPMNVADLL (162 aa)) folds into the Helicase C-terminal domain.

This sequence belongs to the DEAD box helicase family. DDX48/FAL1 subfamily.

The protein localises to the nucleus. It localises to the nucleolus. It catalyses the reaction ATP + H2O = ADP + phosphate + H(+). ATP-dependent RNA helicase involved in 40S ribosomal subunit biogenesis. Required for the processing and cleavage of 35S pre-rRNA at sites A0, A1, and A2, leading to mature 18S rRNA. This chain is ATP-dependent RNA helicase fal1 (fal1), found in Aspergillus niger (strain ATCC MYA-4892 / CBS 513.88 / FGSC A1513).